We begin with the raw amino-acid sequence, 258 residues long: Tryptophan synthase alpha chain (258 aa).

Active-site proton acceptor residues include glutamate 47 and aspartate 58.

This sequence belongs to the TrpA family. Tetramer of two alpha and two beta chains.

The catalysed reaction is (1S,2R)-1-C-(indol-3-yl)glycerol 3-phosphate + L-serine = D-glyceraldehyde 3-phosphate + L-tryptophan + H2O. Its pathway is amino-acid biosynthesis; L-tryptophan biosynthesis; L-tryptophan from chorismate: step 5/5. The alpha subunit is responsible for the aldol cleavage of indoleglycerol phosphate to indole and glyceraldehyde 3-phosphate. This is Tryptophan synthase alpha chain from Bacillus mycoides (strain KBAB4) (Bacillus weihenstephanensis).